A 571-amino-acid chain; its full sequence is Proline--tRNA ligase (571 aa).

It belongs to the class-II aminoacyl-tRNA synthetase family. ProS type 1 subfamily. As to quaternary structure, homodimer.

Its subcellular location is the cytoplasm. It catalyses the reaction tRNA(Pro) + L-proline + ATP = L-prolyl-tRNA(Pro) + AMP + diphosphate. In terms of biological role, catalyzes the attachment of proline to tRNA(Pro) in a two-step reaction: proline is first activated by ATP to form Pro-AMP and then transferred to the acceptor end of tRNA(Pro). As ProRS can inadvertently accommodate and process non-cognate amino acids such as alanine and cysteine, to avoid such errors it has two additional distinct editing activities against alanine. One activity is designated as 'pretransfer' editing and involves the tRNA(Pro)-independent hydrolysis of activated Ala-AMP. The other activity is designated 'posttransfer' editing and involves deacylation of mischarged Ala-tRNA(Pro). The misacylated Cys-tRNA(Pro) is not edited by ProRS. This chain is Proline--tRNA ligase, found in Aliivibrio fischeri (strain MJ11) (Vibrio fischeri).